The primary structure comprises 204 residues: uncharacterized protein (204 aa).

A disordered region spans residues 118 to 169 (FPAASERPMPSRRLSKATQNVQTRPSERPAPCHRRPGPRGPGGRDPPEACHP).

This is an uncharacterized protein from Encephalitozoon cuniculi (strain GB-M1) (Microsporidian parasite).